Here is a 168-residue protein sequence, read N- to C-terminus: Photosystem I assembly protein Ycf3 (168 aa).

3 TPR repeats span residues 29-62 (AFSY…EEDP), 66-99 (SYTL…NANL), and 117-150 (AQSL…APDN).

The protein belongs to the Ycf3 family.

It localises to the plastid. It is found in the chloroplast thylakoid membrane. In terms of biological role, essential for the assembly of the photosystem I (PSI) complex. May act as a chaperone-like factor to guide the assembly of the PSI subunits. In Phaeodactylum tricornutum (strain CCAP 1055/1), this protein is Photosystem I assembly protein Ycf3.